Here is a 503-residue protein sequence, read N- to C-terminus: Glutamate--tRNA ligase 1 (503 aa).

The short motif at 17 to 27 (PSPTGFLHIGN) is the 'HIGH' region element. Positions 261-265 (KLSKR) match the 'KMSKS' region motif. Residue Lys-264 coordinates ATP.

Belongs to the class-I aminoacyl-tRNA synthetase family. Glutamate--tRNA ligase type 1 subfamily. Monomer.

It is found in the cytoplasm. The enzyme catalyses tRNA(Glu) + L-glutamate + ATP = L-glutamyl-tRNA(Glu) + AMP + diphosphate. Catalyzes the attachment of glutamate to tRNA(Glu) in a two-step reaction: glutamate is first activated by ATP to form Glu-AMP and then transferred to the acceptor end of tRNA(Glu). This is Glutamate--tRNA ligase 1 from Levilactobacillus brevis (strain ATCC 367 / BCRC 12310 / CIP 105137 / JCM 1170 / LMG 11437 / NCIMB 947 / NCTC 947) (Lactobacillus brevis).